The sequence spans 619 residues: 1-deoxy-D-xylulose-5-phosphate synthase (619 aa).

Residues histidine 63 and 104–106 (GHS) contribute to the thiamine diphosphate site. Residue aspartate 136 coordinates Mg(2+). Residues 137–138 (GS), asparagine 165, tyrosine 272, and glutamate 353 each bind thiamine diphosphate. Asparagine 165 contacts Mg(2+).

The protein belongs to the transketolase family. DXPS subfamily. In terms of assembly, homodimer. The cofactor is Mg(2+). It depends on thiamine diphosphate as a cofactor.

The catalysed reaction is D-glyceraldehyde 3-phosphate + pyruvate + H(+) = 1-deoxy-D-xylulose 5-phosphate + CO2. The protein operates within metabolic intermediate biosynthesis; 1-deoxy-D-xylulose 5-phosphate biosynthesis; 1-deoxy-D-xylulose 5-phosphate from D-glyceraldehyde 3-phosphate and pyruvate: step 1/1. In terms of biological role, catalyzes the acyloin condensation reaction between C atoms 2 and 3 of pyruvate and glyceraldehyde 3-phosphate to yield 1-deoxy-D-xylulose-5-phosphate (DXP). This chain is 1-deoxy-D-xylulose-5-phosphate synthase, found in Wolinella succinogenes (strain ATCC 29543 / DSM 1740 / CCUG 13145 / JCM 31913 / LMG 7466 / NCTC 11488 / FDC 602W) (Vibrio succinogenes).